A 33-amino-acid chain; its full sequence is MLFTVAWASLAAMFSFSIAMVVWGRNGDGTLKF.

Residues 2-22 form a helical membrane-spanning segment; the sequence is LFTVAWASLAAMFSFSIAMVV.

Belongs to the PetN family. As to quaternary structure, the 4 large subunits of the cytochrome b6-f complex are cytochrome b6, subunit IV (17 kDa polypeptide, PetD), cytochrome f and the Rieske protein, while the 4 small subunits are PetG, PetL, PetM and PetN. The complex functions as a dimer.

The protein resides in the cellular thylakoid membrane. Functionally, component of the cytochrome b6-f complex, which mediates electron transfer between photosystem II (PSII) and photosystem I (PSI), cyclic electron flow around PSI, and state transitions. This chain is Cytochrome b6-f complex subunit 8, found in Synechococcus sp. (strain CC9902).